The following is a 427-amino-acid chain: Terminal nucleotidyltransferase 5B (427 aa).

The disordered stretch occupies residues 1-49 (MMPSESGAESLEQPAAQVGTGAASAVATAGAAGGGPDPEASSASLGRHQ). A compositionally biased stretch (low complexity) spans 15 to 30 (AAQVGTGAASAVATAG).

The protein belongs to the TENT family.

Its subcellular location is the cytoplasm. It localises to the nucleus. The catalysed reaction is RNA(n) + ATP = RNA(n)-3'-adenine ribonucleotide + diphosphate. Functionally, catalyzes the transfer of one adenosine molecule from an ATP to an mRNA poly(A) tail bearing a 3'-OH terminal group in an ATP hydrolysis-dependent manner. May be involved in maintaining the translation efficiency of at least some genes through preventing degradation of their mRNAs. Prefers RNA molecules that are adenosine-rich close to 3'-end. In addition, may inhibit cell proliferation and cell cycle progression through ubiquitination of beta-catenin/CTNNB1. This is Terminal nucleotidyltransferase 5B from Mus musculus (Mouse).